Here is a 180-residue protein sequence, read N- to C-terminus: MFDAHSTTILSVRRGNHVAIAGDGQVSLGQTIMKGNARKIRRLYHDQILAGFAGATADAFTLFELFEGKLEAQDGQLLRAAVEMAKEWRTDRSLRRLEAMLIVADRNNTLILSGNGDIVEPENSLAAIGSGGMYALAAARALYHNTEMDALSIAEKSLNIAADICIYTNHNIVSDELKDA.

The active site involves Thr7. Na(+) contacts are provided by Ala162, Cys165, and Thr168.

This sequence belongs to the peptidase T1B family. HslV subfamily. In terms of assembly, a double ring-shaped homohexamer of HslV is capped on each side by a ring-shaped HslU homohexamer. The assembly of the HslU/HslV complex is dependent on binding of ATP.

The protein localises to the cytoplasm. The enzyme catalyses ATP-dependent cleavage of peptide bonds with broad specificity.. Its activity is regulated as follows. Allosterically activated by HslU binding. Functionally, protease subunit of a proteasome-like degradation complex believed to be a general protein degrading machinery. The polypeptide is ATP-dependent protease subunit HslV (Dichelobacter nodosus (strain VCS1703A)).